The sequence spans 215 residues: Dual specificity phosphatase 29 (215 aa).

In terms of domain architecture, Tyrosine-protein phosphatase spans His53 to Lys201. Substrate is bound at residue His145–Arg152. Cys146 serves as the catalytic Phosphocysteine intermediate.

This sequence belongs to the protein-tyrosine phosphatase family. Non-receptor class dual specificity subfamily. Homodimer. Interacts with PRKAA2.

Its subcellular location is the cytoplasm. It is found in the nucleus. It catalyses the reaction O-phospho-L-tyrosyl-[protein] + H2O = L-tyrosyl-[protein] + phosphate. The catalysed reaction is O-phospho-L-seryl-[protein] + H2O = L-seryl-[protein] + phosphate. The enzyme catalyses O-phospho-L-threonyl-[protein] + H2O = L-threonyl-[protein] + phosphate. Dual specificity phosphatase able to dephosphorylate phosphotyrosine, phosphoserine and phosphothreonine residues within the same substrate, with a preference for phosphotyrosine as a substrate. Involved in the modulation of intracellular signaling cascades. In skeletal muscle regulates systemic glucose homeostasis by activating, AMPK, an energy sensor protein kinase. Affects MAP kinase signaling though modulation of the MAPK1/2 cascade in skeletal muscle promoting muscle cell differentiation, development and atrophy. In Rattus norvegicus (Rat), this protein is Dual specificity phosphatase 29 (Dusp29).